Here is a 180-residue protein sequence, read N- to C-terminus: uncharacterized protein (180 aa).

It is found in the mitochondrion. This is an uncharacterized protein from Marchantia polymorpha (Common liverwort).